Reading from the N-terminus, the 379-residue chain is Protein RecA (379 aa).

G79 to T86 is a binding site for ATP.

Belongs to the RecA family.

The protein localises to the cytoplasm. In terms of biological role, can catalyze the hydrolysis of ATP in the presence of single-stranded DNA, the ATP-dependent uptake of single-stranded DNA by duplex DNA, and the ATP-dependent hybridization of homologous single-stranded DNAs. It interacts with LexA causing its activation and leading to its autocatalytic cleavage. The polypeptide is Protein RecA (Streptococcus uberis (strain ATCC BAA-854 / 0140J)).